The primary structure comprises 147 residues: Cell division protein SepF 1 (147 aa).

The protein belongs to the SepF family. Homodimer. Interacts with FtsZ.

The protein resides in the cytoplasm. Its function is as follows. Cell division protein that is part of the divisome complex and is recruited early to the Z-ring. Probably stimulates Z-ring formation, perhaps through the cross-linking of FtsZ protofilaments. Its function overlaps with FtsA. This Desulforamulus reducens (strain ATCC BAA-1160 / DSM 100696 / MI-1) (Desulfotomaculum reducens) protein is Cell division protein SepF 1.